The chain runs to 242 residues: Ribose-5-phosphate isomerase A (242 aa).

Substrate is bound by residues 39–42 (SGST), 95–98 (DGAD), and 108–111 (KGGG). Glu117 acts as the Proton acceptor in catalysis. Lys135 lines the substrate pocket.

It belongs to the ribose 5-phosphate isomerase family. Homodimer.

It carries out the reaction aldehydo-D-ribose 5-phosphate = D-ribulose 5-phosphate. The protein operates within carbohydrate degradation; pentose phosphate pathway; D-ribose 5-phosphate from D-ribulose 5-phosphate (non-oxidative stage): step 1/1. Its function is as follows. Catalyzes the reversible conversion of ribose-5-phosphate to ribulose 5-phosphate. The polypeptide is Ribose-5-phosphate isomerase A (Chlamydia trachomatis serovar D (strain ATCC VR-885 / DSM 19411 / UW-3/Cx)).